A 156-amino-acid polypeptide reads, in one-letter code: Transcription antitermination protein NusB (156 aa).

This sequence belongs to the NusB family.

Involved in transcription antitermination. Required for transcription of ribosomal RNA (rRNA) genes. Binds specifically to the boxA antiterminator sequence of the ribosomal RNA (rrn) operons. The chain is Transcription antitermination protein NusB from Rickettsia massiliae (strain Mtu5).